Here is a 350-residue protein sequence, read N- to C-terminus: Nuclear pore complex-interacting protein family member A3 (350 aa).

The segment at 306–325 (KTPPECLLTPLPPSAPPSVD) is disordered.

This sequence belongs to the NPIP family.

This chain is Nuclear pore complex-interacting protein family member A3 (NPIPA3), found in Homo sapiens (Human).